Reading from the N-terminus, the 221-residue chain is Phosphoglycolate phosphatase (221 aa).

Asp10 acts as the Nucleophile in catalysis. The Mg(2+) site is built by Asp10, Asp12, and Asp168.

It belongs to the HAD-like hydrolase superfamily. CbbY/CbbZ/Gph/YieH family. Mg(2+) is required as a cofactor.

The enzyme catalyses 2-phosphoglycolate + H2O = glycolate + phosphate. It functions in the pathway organic acid metabolism; glycolate biosynthesis; glycolate from 2-phosphoglycolate: step 1/1. Its function is as follows. Specifically catalyzes the dephosphorylation of 2-phosphoglycolate. Is involved in the dissimilation of the intracellular 2-phosphoglycolate formed during the DNA repair of 3'-phosphoglycolate ends, a major class of DNA lesions induced by oxidative stress. This is Phosphoglycolate phosphatase from Xanthomonas campestris pv. campestris (strain 8004).